Here is a 92-residue protein sequence, read N- to C-terminus: RNA-binding protein Hfq (92 aa).

Positions 11–71 constitute a Sm domain; the sequence is DRFLNHLRVN…ISTIIPSSYV (61 aa).

It belongs to the Hfq family. As to quaternary structure, homohexamer.

RNA chaperone that binds small regulatory RNA (sRNAs) and mRNAs to facilitate mRNA translational regulation in response to envelope stress, environmental stress and changes in metabolite concentrations. Also binds with high specificity to tRNAs. The sequence is that of RNA-binding protein Hfq from Thermotoga maritima (strain ATCC 43589 / DSM 3109 / JCM 10099 / NBRC 100826 / MSB8).